We begin with the raw amino-acid sequence, 88 residues long: L-amino-acid oxidase (88 aa).

FAD-binding positions include Glu74 and Gly81–Thr86. Gly81–Trp82 provides a ligand contact to substrate.

The protein belongs to the flavin monoamine oxidase family. FIG1 subfamily. In terms of assembly, homodimer; non-covalently linked. FAD is required as a cofactor. Post-translationally, N-glycosylated. As to expression, expressed by the venom gland.

It is found in the secreted. It carries out the reaction an L-alpha-amino acid + O2 + H2O = a 2-oxocarboxylate + H2O2 + NH4(+). The catalysed reaction is L-leucine + O2 + H2O = 4-methyl-2-oxopentanoate + H2O2 + NH4(+). The enzyme catalyses L-phenylalanine + O2 + H2O = 3-phenylpyruvate + H2O2 + NH4(+). It catalyses the reaction L-tryptophan + O2 + H2O = indole-3-pyruvate + H2O2 + NH4(+). It carries out the reaction L-methionine + O2 + H2O = 4-methylsulfanyl-2-oxobutanoate + H2O2 + NH4(+). The catalysed reaction is L-isoleucine + O2 + H2O = (S)-3-methyl-2-oxopentanoate + H2O2 + NH4(+). The enzyme catalyses L-arginine + O2 + H2O = 5-guanidino-2-oxopentanoate + H2O2 + NH4(+). It catalyses the reaction L-histidine + O2 + H2O = 3-(imidazol-5-yl)pyruvate + H2O2 + NH4(+). It carries out the reaction L-asparagine + O2 + H2O = 2-oxosuccinamate + H2O2 + NH4(+). The catalysed reaction is L-valine + O2 + H2O = 3-methyl-2-oxobutanoate + H2O2 + NH4(+). The enzyme catalyses L-glutamate + O2 + H2O = H2O2 + 2-oxoglutarate + NH4(+). In terms of biological role, catalyzes an oxidative deamination of predominantly hydrophobic and aromatic L-amino acids, thus producing hydrogen peroxide that may contribute to the diverse toxic effects of this enzyme. Is highly active on L-Met, L-Leu, L-Phe, L-Ile, and L-Arg, moderately active on L-His, L-Trp, L-Asn, L-Glu, and L-Val, and weakly or not active on L-Gln, L-Lys, L-Asp, L-Ala, L-Tyr, L-Ser, L-Pro, L-Gly, L-Thr, and L-Cys. Exhibits diverse biological activities, such as hemorrhage, hemolysis, edema, apoptosis of vascular endothelial cells or tumor cell lines, antibacterial and antiparasitic activities. In addition, this protein has an ability to induce apoptosis in cultured HeLa and K562 cells, and inhibits ADP-induced platelet aggregation dose-dependently. Effects of snake L-amino oxidases on platelets are controversial, since they either induce aggregation or inhibit agonist-induced aggregation. These different effects are probably due to different experimental conditions. In Vipera berus berus (Common viper), this protein is L-amino-acid oxidase.